The primary structure comprises 308 residues: Urease accessory protein UreD (308 aa).

The protein belongs to the UreD family. UreD, UreF and UreG form a complex that acts as a GTP-hydrolysis-dependent molecular chaperone, activating the urease apoprotein by helping to assemble the nickel containing metallocenter of UreC. The UreE protein probably delivers the nickel.

The protein resides in the cytoplasm. Required for maturation of urease via the functional incorporation of the urease nickel metallocenter. This Psychromonas ingrahamii (strain DSM 17664 / CCUG 51855 / 37) protein is Urease accessory protein UreD.